The primary structure comprises 345 residues: Phosphoribosylformylglycinamidine cyclo-ligase (345 aa).

The protein belongs to the AIR synthase family.

The protein resides in the cytoplasm. It carries out the reaction 2-formamido-N(1)-(5-O-phospho-beta-D-ribosyl)acetamidine + ATP = 5-amino-1-(5-phospho-beta-D-ribosyl)imidazole + ADP + phosphate + H(+). Its pathway is purine metabolism; IMP biosynthesis via de novo pathway; 5-amino-1-(5-phospho-D-ribosyl)imidazole from N(2)-formyl-N(1)-(5-phospho-D-ribosyl)glycinamide: step 2/2. The polypeptide is Phosphoribosylformylglycinamidine cyclo-ligase (Escherichia coli O127:H6 (strain E2348/69 / EPEC)).